A 399-amino-acid polypeptide reads, in one-letter code: Beta sliding clamp (399 aa).

Belongs to the beta sliding clamp family. As to quaternary structure, forms a ring-shaped head-to-tail homodimer around DNA which binds and tethers DNA polymerases and other proteins to the DNA. The DNA replisome complex has a single clamp-loading complex (3 tau and 1 each of delta, delta', psi and chi subunits) which binds 3 Pol III cores (1 core on the leading strand and 2 on the lagging strand) each with a beta sliding clamp dimer. Additional proteins in the replisome are other copies of gamma, psi and chi, Ssb, DNA helicase and RNA primase.

The protein localises to the cytoplasm. Confers DNA tethering and processivity to DNA polymerases and other proteins. Acts as a clamp, forming a ring around DNA (a reaction catalyzed by the clamp-loading complex) which diffuses in an ATP-independent manner freely and bidirectionally along dsDNA. Initially characterized for its ability to contact the catalytic subunit of DNA polymerase III (Pol III), a complex, multichain enzyme responsible for most of the replicative synthesis in bacteria; Pol III exhibits 3'-5' exonuclease proofreading activity. The beta chain is required for initiation of replication as well as for processivity of DNA replication. This chain is Beta sliding clamp (dnaN), found in Mycolicibacterium paratuberculosis (strain ATCC BAA-968 / K-10) (Mycobacterium paratuberculosis).